Consider the following 486-residue polypeptide: Regulatory protein ViaA (486 aa).

It belongs to the ViaA family. As to quaternary structure, homodimer. Interacts with RavA.

It localises to the cytoplasm. In terms of biological role, component of the RavA-ViaA chaperone complex, which may act on the membrane to optimize the function of some of the respiratory chains. ViaA stimulates the ATPase activity of RavA. This Erwinia tasmaniensis (strain DSM 17950 / CFBP 7177 / CIP 109463 / NCPPB 4357 / Et1/99) protein is Regulatory protein ViaA.